The following is a 448-amino-acid chain: Tubulin beta-2 chain (448 aa).

8 residues coordinate GTP: Gln11, Glu69, Ser138, Gly142, Thr143, Gly144, Asn204, and Asn226. Glu69 lines the Mg(2+) pocket. The segment at 429 to 448 (TADEDGYEYEDEEEVGEEDA) is disordered.

This sequence belongs to the tubulin family. In terms of assembly, dimer of alpha and beta chains. A typical microtubule is a hollow water-filled tube with an outer diameter of 25 nm and an inner diameter of 15 nM. Alpha-beta heterodimers associate head-to-tail to form protofilaments running lengthwise along the microtubule wall with the beta-tubulin subunit facing the microtubule plus end conferring a structural polarity. Microtubules usually have 13 protofilaments but different protofilament numbers can be found in some organisms and specialized cells. The cofactor is Mg(2+).

The protein localises to the cytoplasm. The protein resides in the cytoskeleton. Its function is as follows. Tubulin is the major constituent of microtubules, a cylinder consisting of laterally associated linear protofilaments composed of alpha- and beta-tubulin heterodimers. Microtubules grow by the addition of GTP-tubulin dimers to the microtubule end, where a stabilizing cap forms. Below the cap, tubulin dimers are in GDP-bound state, owing to GTPase activity of alpha-tubulin. This Lupinus albus (White lupine) protein is Tubulin beta-2 chain (TUBB2).